We begin with the raw amino-acid sequence, 645 residues long: Serine/threonine-protein kinase BUR1 (645 aa).

Residues 55 to 379 form the Protein kinase domain; the sequence is YREEEKLGQG…AMKAKKHPFF (325 aa). ATP contacts are provided by residues 61–69 and K84; that span reads LGQGTFGEV. D208 (proton acceptor) is an active-site residue. 3 disordered regions span residues 407–428, 442–513, and 533–645; these read EMNESMSQRPPSAPTGHTSTDN, ASIP…KYPA, and RYRN…ADYY. 2 stretches are compositionally biased toward polar residues: residues 409 to 428 and 457 to 474; these read NESMSQRPPSAPTGHTSTDN and IPAQPSASRYNGAATQNI. Pro residues predominate over residues 477–486; the sequence is EPIPTAPLPK. A compositionally biased stretch (polar residues) spans 578–598; it reads NRYQNQDYNTSRNTGYNQYSQ.

Belongs to the protein kinase superfamily. CMGC Ser/Thr protein kinase family. CDC2/CDKX subfamily.

It is found in the nucleus. It catalyses the reaction L-seryl-[protein] + ATP = O-phospho-L-seryl-[protein] + ADP + H(+). It carries out the reaction L-threonyl-[protein] + ATP = O-phospho-L-threonyl-[protein] + ADP + H(+). The catalysed reaction is [DNA-directed RNA polymerase] + ATP = phospho-[DNA-directed RNA polymerase] + ADP + H(+). Functionally, serine/threonine-protein kinase involved in transcription regulation. Phosphorylates the UBC2/RAD6 ubiquitin-conjugating enzyme (E2), leading to monoubiquitination of histone H2B and the silencing of telomeric-associated genes. Also required for histone H3 methylation. Necessary for the recovery from pheromone-induced growth arrest in the cell cycle G1 phase. This chain is Serine/threonine-protein kinase BUR1 (BUR1), found in Kluyveromyces lactis (strain ATCC 8585 / CBS 2359 / DSM 70799 / NBRC 1267 / NRRL Y-1140 / WM37) (Yeast).